The following is a 70-amino-acid chain: Translational regulator CsrA (70 aa).

This sequence belongs to the CsrA/RsmA family. In terms of assembly, homodimer; the beta-strands of each monomer intercalate to form a hydrophobic core, while the alpha-helices form wings that extend away from the core.

The protein resides in the cytoplasm. A translational regulator that binds mRNA to regulate translation initiation and/or mRNA stability. Usually binds in the 5'-UTR at or near the Shine-Dalgarno sequence preventing ribosome-binding, thus repressing translation. Its main target seems to be the major flagellin gene, while its function is anatagonized by FliW. In Clostridioides difficile (strain 630) (Peptoclostridium difficile), this protein is Translational regulator CsrA.